The chain runs to 225 residues: UPF0758 protein NMB1038 (225 aa).

The MPN domain occupies 102-224 (VLSDPDTVAD…VCSFRQLGLM (123 aa)). Residues His173, His175, and Asp186 each coordinate Zn(2+). The short motif at 173–186 (HNHPGGSPEPSQED) is the JAMM motif element.

Belongs to the UPF0758 family.

This chain is UPF0758 protein NMB1038, found in Neisseria meningitidis serogroup B (strain ATCC BAA-335 / MC58).